A 263-amino-acid polypeptide reads, in one-letter code: CRISPR-associated protein Cas5 2 (263 aa).

Belongs to the CRISPR-associated protein Cas5 family. Subtype I-A/Apern subfamily. Part of the aCascade ribonucleoprotein complex, minimally composed of Csa2 and Cas5a, which binds crRNA. Other possible components of aCascade in strain P1 are Cas6b (SSO1437) and Csa5 (SSO1443), while SSO1399, Cas5b (SSO1400) and SSO1401 have sometimes been seen weakly associated. Csa2 is probably the major RNA-binding subunit. The Csa2-Cas5a-crRNA complex also binds target DNA homologous to crRNA, probably forming an R-loop. Purified aCascade forms a filament about 6 nm in width.

Functionally, CRISPR (clustered regularly interspaced short palindromic repeat) is an adaptive immune system that provides protection against mobile genetic elements (viruses, transposable elements and conjugative plasmids). CRISPR clusters contain spacers, sequences complementary to antecedent mobile elements, and target invading nucleic acids. CRISPR clusters are transcribed and processed into CRISPR RNA (crRNA). This Saccharolobus solfataricus (strain ATCC 35092 / DSM 1617 / JCM 11322 / P2) (Sulfolobus solfataricus) protein is CRISPR-associated protein Cas5 2 (cas5b).